A 512-amino-acid polypeptide reads, in one-letter code: Protein singed (512 aa).

Belongs to the fascin family. Interacts with Rab35, with stronger binding to the Rab35-GTP form compared to the Rab35-GDP form.

The protein resides in the cytoplasm. The protein localises to the cytoskeleton. In terms of biological role, acts as an actin bundling protein. May have a role in the asymmetric organization and/or movement of cytoplasmic components. It has a role in somatic cells during the formation of adult bristles and hairs, and in the female germline during oogenesis. The protein is Protein singed (sn) of Drosophila melanogaster (Fruit fly).